Consider the following 200-residue polypeptide: Putative 3-methyladenine DNA glycosylase (200 aa).

Belongs to the DNA glycosylase MPG family.

In Methanocella arvoryzae (strain DSM 22066 / NBRC 105507 / MRE50), this protein is Putative 3-methyladenine DNA glycosylase.